Reading from the N-terminus, the 89-residue chain is MVKIRLRRTGKTKQPSYRIVVADSRSPRDGKFIETIGYYLPTRQPKVLEIKADRARYWLGVGAQPTEVVVKLLKRVNVLDEQGKVIAEA.

Belongs to the bacterial ribosomal protein bS16 family.

The chain is Small ribosomal subunit protein bS16 from Chloroflexus aurantiacus (strain ATCC 29364 / DSM 637 / Y-400-fl).